The primary structure comprises 160 residues: Transcription elongation factor GreA (160 aa).

Residues 50–70 (AAREQQSFNEGRIQELEAKLS) are a coiled coil.

Belongs to the GreA/GreB family.

Its function is as follows. Necessary for efficient RNA polymerase transcription elongation past template-encoded arresting sites. The arresting sites in DNA have the property of trapping a certain fraction of elongating RNA polymerases that pass through, resulting in locked ternary complexes. Cleavage of the nascent transcript by cleavage factors such as GreA or GreB allows the resumption of elongation from the new 3'terminus. GreA releases sequences of 2 to 3 nucleotides. This Legionella pneumophila (strain Paris) protein is Transcription elongation factor GreA.